A 236-amino-acid polypeptide reads, in one-letter code: Ribonuclease HII (236 aa).

One can recognise an RNase H type-2 domain in the interval 21–214 (RTVAGVDEVG…LDALPRWQHL (194 aa)). Residues Asp27, Glu28, and Asp119 each coordinate a divalent metal cation.

Belongs to the RNase HII family. Requires Mn(2+) as cofactor. It depends on Mg(2+) as a cofactor.

The protein resides in the cytoplasm. The enzyme catalyses Endonucleolytic cleavage to 5'-phosphomonoester.. Functionally, endonuclease that specifically degrades the RNA of RNA-DNA hybrids. This is Ribonuclease HII from Streptomyces griseus subsp. griseus (strain JCM 4626 / CBS 651.72 / NBRC 13350 / KCC S-0626 / ISP 5235).